The chain runs to 120 residues: Ribosome-binding factor A (120 aa).

It belongs to the RbfA family. Monomer. Binds 30S ribosomal subunits, but not 50S ribosomal subunits or 70S ribosomes.

Its subcellular location is the cytoplasm. Functionally, one of several proteins that assist in the late maturation steps of the functional core of the 30S ribosomal subunit. Associates with free 30S ribosomal subunits (but not with 30S subunits that are part of 70S ribosomes or polysomes). Required for efficient processing of 16S rRNA. May interact with the 5'-terminal helix region of 16S rRNA. The chain is Ribosome-binding factor A from Chlorobaculum tepidum (strain ATCC 49652 / DSM 12025 / NBRC 103806 / TLS) (Chlorobium tepidum).